The primary structure comprises 396 residues: Pectinesterase (396 aa).

The signal sequence occupies residues 1–26 (MQSTTLYLKTAAFLGGCSLFAATALA). Thr174 contacts substrate. The active-site Proton donor is the Asp232. The Nucleophile role is filled by Asp259. Positions 324 and 326 each coordinate substrate.

This sequence belongs to the pectinesterase family.

The protein localises to the secreted. The enzyme catalyses [(1-&gt;4)-alpha-D-galacturonosyl methyl ester](n) + n H2O = [(1-&gt;4)-alpha-D-galacturonosyl](n) + n methanol + n H(+). It participates in glycan metabolism; pectin degradation; 2-dehydro-3-deoxy-D-gluconate from pectin: step 1/5. In terms of biological role, involved in maceration and soft-rotting of plant tissue. This chain is Pectinesterase (pme), found in Ralstonia solanacearum (Pseudomonas solanacearum).